Here is a 391-residue protein sequence, read N- to C-terminus: Ectodysplasin-A (391 aa).

The Cytoplasmic segment spans residues 1 to 41 (MGYPEVERRELLPAAAPRERGSQGCGCGGAPARAGEGNSCL). Residues 42 to 62 (LFLGFFGLSLALHLLTLCCYL) form a helical; Signal-anchor for type II membrane protein membrane-spanning segment. Residues 63–391 (ELRSELRRER…AIRLGEAPAS (329 aa)) lie on the Extracellular side of the membrane. Disordered regions lie at residues 73–127 (GAES…HSDS) and 146–245 (YSEE…GTRE). Residues 86–101 (TSGTLSSLGGLDPDSP) show a composition bias toward low complexity. Polar residues predominate over residues 102–113 (ITSHLGQPSPKQ). One can recognise a Collagen-like domain in the interval 180–229 (GPPGPNGPPGPPGPPGPQGPPGIPGIPGIPGTTVMGPPGPPGPPGPQGPP). Composition is skewed to pro residues over residues 181 to 203 (PPGP…PGIP) and 216 to 228 (PPGP…PQGP). In terms of domain architecture, THD spans 249–385 (AVVHLQGQGS…HTTFFGAIRL (137 aa)). N-linked (GlcNAc...) asparagine glycosylation occurs at asparagine 313. An intrachain disulfide couples cysteine 332 to cysteine 346. N-linked (GlcNAc...) asparagine glycosylation is present at asparagine 372.

The protein belongs to the tumor necrosis factor family. Homotrimer. The homotrimers may then dimerize and form higher-order oligomers. Post-translationally, N-glycosylated. In terms of processing, processing by furin produces a secreted form. Not abundant; expressed in specific cell types of ectodermal (but not mesodermal) origin of keratinocytes, hair follicles, sweat glands. Also in adult heart, liver, muscle, pancreas, prostate, fetal liver, uterus, small intestine and umbilical cord.

The protein resides in the cell membrane. It localises to the secreted. Its function is as follows. Cytokine which is involved in epithelial-mesenchymal signaling during morphogenesis of ectodermal organs. Functions as a ligand activating the DEATH-domain containing receptors EDAR and EDA2R. May also play a role in cell adhesion. In terms of biological role, binds only to the receptor EDAR, while isoform 3 binds exclusively to the receptor EDA2R. Binds only to the receptor EDA2R. This is Ectodysplasin-A (EDA) from Homo sapiens (Human).